A 198-amino-acid polypeptide reads, in one-letter code: Prostamide/prostaglandin F synthase (198 aa).

A Phosphotyrosine modification is found at Tyr-108.

It belongs to the peroxiredoxin-like PRXL2 family. Prostamide/prostaglandin F synthase subfamily.

The protein localises to the cytoplasm. It is found in the cytosol. It catalyses the reaction prostaglandin H2 + [thioredoxin]-dithiol = prostaglandin F2alpha + [thioredoxin]-disulfide. It carries out the reaction prostamide F2alpha + [thioredoxin]-disulfide = prostamide H2 + [thioredoxin]-dithiol. In terms of biological role, catalyzes the reduction of prostaglandin-ethanolamide H(2) (prostamide H(2)) to prostamide F(2alpha) with NADPH as proton donor. Also able to reduce prostaglandin H(2) to prostaglandin F(2alpha). The chain is Prostamide/prostaglandin F synthase (PRXL2B) from Pongo abelii (Sumatran orangutan).